A 216-amino-acid chain; its full sequence is Guanylate kinase (216 aa).

In terms of domain architecture, Guanylate kinase-like spans 11–189 (GVLIVISGPS…AVKKIEAILL (179 aa)). 18-25 (GPSGAGKG) contributes to the ATP binding site.

Belongs to the guanylate kinase family.

The protein localises to the cytoplasm. The catalysed reaction is GMP + ATP = GDP + ADP. In terms of biological role, essential for recycling GMP and indirectly, cGMP. The protein is Guanylate kinase (gmk) of Clostridium perfringens (strain 13 / Type A).